We begin with the raw amino-acid sequence, 196 residues long: Holliday junction branch migration complex subunit RuvA (196 aa).

The interval 1–62 is domain I; the sequence is MYEYINGLIT…ENDISLYGFI (62 aa). The tract at residues 63–141 is domain II; that stretch reads DADEKALFNK…ELASKTGMVD (79 aa). The tract at residues 142–148 is flexible linker; it reads SSSNPEQ. Residues 148 to 196 are domain III; it reads QSQALDDALEALLALGYTAKDVKAVAQIIGRNSDTTDGYIRSALKLLVK.

Belongs to the RuvA family. As to quaternary structure, homotetramer. Forms an RuvA(8)-RuvB(12)-Holliday junction (HJ) complex. HJ DNA is sandwiched between 2 RuvA tetramers; dsDNA enters through RuvA and exits via RuvB. An RuvB hexamer assembles on each DNA strand where it exits the tetramer. Each RuvB hexamer is contacted by two RuvA subunits (via domain III) on 2 adjacent RuvB subunits; this complex drives branch migration. In the full resolvosome a probable DNA-RuvA(4)-RuvB(12)-RuvC(2) complex forms which resolves the HJ.

Its subcellular location is the cytoplasm. The RuvA-RuvB-RuvC complex processes Holliday junction (HJ) DNA during genetic recombination and DNA repair, while the RuvA-RuvB complex plays an important role in the rescue of blocked DNA replication forks via replication fork reversal (RFR). RuvA specifically binds to HJ cruciform DNA, conferring on it an open structure. The RuvB hexamer acts as an ATP-dependent pump, pulling dsDNA into and through the RuvAB complex. HJ branch migration allows RuvC to scan DNA until it finds its consensus sequence, where it cleaves and resolves the cruciform DNA. In Leuconostoc mesenteroides subsp. mesenteroides (strain ATCC 8293 / DSM 20343 / BCRC 11652 / CCM 1803 / JCM 6124 / NCDO 523 / NBRC 100496 / NCIMB 8023 / NCTC 12954 / NRRL B-1118 / 37Y), this protein is Holliday junction branch migration complex subunit RuvA.